Here is a 178-residue protein sequence, read N- to C-terminus: uncharacterized protein (178 aa).

The segment covering 1–13 has biased composition (polar residues); it reads MEVASSSSACQFD. Disordered regions lie at residues 1–24 and 47–114; these read MEVASSSSACQFDNLNNNNNELKP and WPSR…KKEK.

This is an uncharacterized protein from Caenorhabditis elegans.